Reading from the N-terminus, the 224-residue chain is Endoplasmic reticulum vesicle protein 25 (224 aa).

Positions 1 to 25 (MIPPRSLGSTAALLLVLLFTTLASA) are cleaved as a signal peptide. The Lumenal portion of the chain corresponds to 26-190 (IKFDLPSNAH…ADTNLSTNMR (165 aa)). The 94-residue stretch at 38–131 (TKCIWNYALS…IPVVTIDLDV (94 aa)) folds into the GOLD domain. The chain crosses the membrane as a helical span at residues 191-211 (VTNFAILTLIALIALGVWQVF). Residues 212-224 (HLRGFFKRKYLID) lie on the Cytoplasmic side of the membrane.

The protein belongs to the EMP24/GP25L family.

It localises to the endoplasmic reticulum membrane. It is found in the golgi apparatus membrane. Constituent of COPII-coated endoplasmic reticulum-derived transport vesicles. Required for efficient transport of a subset of secretory proteins to the Golgi. Facilitates retrograde transport from the Golgi to the endoplasmic reticulum. The protein is Endoplasmic reticulum vesicle protein 25 (ERV25) of Mycosarcoma maydis (Corn smut fungus).